Reading from the N-terminus, the 310-residue chain is MKVGIVGSGMVGSATAYALALLGVAREVVLVDLDRKLAQAHAEDILHATPFAHPVWVRAGSYGDLEGARAVVLAAGVAQRPGETRLQLLDRNAQVFAQVVPRVLEAAPEAVLLVATNPVDVMTQVAYRLSGLPPGRVVGSGTILDTARFRALLAEYLRVAPQSVHAYVLGEHGDSEVLVWSSAQVGGVPLLEFAEARGRALSPEDRARIDEGVRRAAYRIIEGKGATYYGIGAGLARLVRAILTDEKGVYTVSAFTPEVEGVLEVSLSLPRILGAGGVEGTVYPSLSPEEREALRRSAEILKEAAFALGF.

NAD(+) is bound by residues 10-11 (MV), aspartate 32, tyrosine 62, and 76-77 (GV). Substrate is bound by residues glutamine 79, arginine 85, and 117-120 (NPVD). Residues 115 to 117 (ATN) and serine 140 each bind NAD(+). Residue 145–148 (DTAR) coordinates substrate. Residues arginine 150 and histidine 165 each coordinate beta-D-fructose 1,6-bisphosphate. Histidine 172 functions as the Proton acceptor in the catalytic mechanism. The residue at position 218 (tyrosine 218) is a Phosphotyrosine. Threonine 227 is a substrate binding site.

This sequence belongs to the LDH/MDH superfamily. LDH family. In terms of assembly, homotetramer.

Its subcellular location is the cytoplasm. It carries out the reaction (S)-lactate + NAD(+) = pyruvate + NADH + H(+). Its pathway is fermentation; pyruvate fermentation to lactate; (S)-lactate from pyruvate: step 1/1. With respect to regulation, allosterically activated by fructose 1,6-bisphosphate (FBP). Catalyzes the conversion of lactate to pyruvate. This is L-lactate dehydrogenase from Thermus thermophilus (strain ATCC 27634 / DSM 579 / HB8).